A 540-amino-acid polypeptide reads, in one-letter code: Bifunctional purine biosynthesis protein PurH (540 aa).

An MGS-like domain is found at 1–144 (MKRALISVYD…KNYQDVGVVV (144 aa)). Residues 204–224 (ETAPERPIGADPGPQKPAAPS) form a disordered region.

This sequence belongs to the PurH family.

The catalysed reaction is (6R)-10-formyltetrahydrofolate + 5-amino-1-(5-phospho-beta-D-ribosyl)imidazole-4-carboxamide = 5-formamido-1-(5-phospho-D-ribosyl)imidazole-4-carboxamide + (6S)-5,6,7,8-tetrahydrofolate. It carries out the reaction IMP + H2O = 5-formamido-1-(5-phospho-D-ribosyl)imidazole-4-carboxamide. It participates in purine metabolism; IMP biosynthesis via de novo pathway; 5-formamido-1-(5-phospho-D-ribosyl)imidazole-4-carboxamide from 5-amino-1-(5-phospho-D-ribosyl)imidazole-4-carboxamide (10-formyl THF route): step 1/1. Its pathway is purine metabolism; IMP biosynthesis via de novo pathway; IMP from 5-formamido-1-(5-phospho-D-ribosyl)imidazole-4-carboxamide: step 1/1. The polypeptide is Bifunctional purine biosynthesis protein PurH (Symbiobacterium thermophilum (strain DSM 24528 / JCM 14929 / IAM 14863 / T)).